The sequence spans 295 residues: Tyrosine recombinase XerD (295 aa).

The region spanning 1-85 (METIIEEYLK…TIRSFHQFAL (85 aa)) is the Core-binding (CB) domain. Positions 106–289 (KLPDVLDVEE…SKTQIRQMYN (184 aa)) constitute a Tyr recombinase domain. Active-site residues include R146, K170, H241, R244, and H267. The O-(3'-phospho-DNA)-tyrosine intermediate role is filled by Y276.

The protein belongs to the 'phage' integrase family. XerD subfamily. As to quaternary structure, forms a cyclic heterotetrameric complex composed of two molecules of XerC and two molecules of XerD.

It is found in the cytoplasm. Functionally, site-specific tyrosine recombinase, which acts by catalyzing the cutting and rejoining of the recombining DNA molecules. The XerC-XerD complex is essential to convert dimers of the bacterial chromosome into monomers to permit their segregation at cell division. It also contributes to the segregational stability of plasmids. The chain is Tyrosine recombinase XerD from Staphylococcus haemolyticus (strain JCSC1435).